A 198-amino-acid chain; its full sequence is Recombination protein RecR (198 aa).

Residues 57-72 (CSVCGHITDQDPCYIC) form a C4-type zinc finger. The 96-residue stretch at 80–175 (SVICVVQDPK…KLSRIAHGLP (96 aa)) folds into the Toprim domain.

The protein belongs to the RecR family.

Functionally, may play a role in DNA repair. It seems to be involved in an RecBC-independent recombinational process of DNA repair. It may act with RecF and RecO. In Bacillus licheniformis (strain ATCC 14580 / DSM 13 / JCM 2505 / CCUG 7422 / NBRC 12200 / NCIMB 9375 / NCTC 10341 / NRRL NRS-1264 / Gibson 46), this protein is Recombination protein RecR.